Here is a 241-residue protein sequence, read N- to C-terminus: Uridylate kinase (241 aa).

15 to 18 (KISG) is a binding site for ATP. Residues 23–28 (GDQGFG) form an involved in allosteric activation by GTP region. Gly57 contributes to the UMP binding site. 2 residues coordinate ATP: Gly58 and Arg62. UMP contacts are provided by residues Asp77 and 138–145 (TGNPYFTT). ATP-binding residues include Thr165, Tyr171, and Asp174.

It belongs to the UMP kinase family. In terms of assembly, homohexamer.

It is found in the cytoplasm. The catalysed reaction is UMP + ATP = UDP + ADP. It functions in the pathway pyrimidine metabolism; CTP biosynthesis via de novo pathway; UDP from UMP (UMPK route): step 1/1. Its activity is regulated as follows. Allosterically activated by GTP. Inhibited by UTP. In terms of biological role, catalyzes the reversible phosphorylation of UMP to UDP. The chain is Uridylate kinase from Paracoccus zeaxanthinifaciens.